Here is a 127-residue protein sequence, read N- to C-terminus: C-C motif chemokine 28 (127 aa).

The signal sequence occupies residues 1 to 19 (MQQRGLAIVALAVCAALHA). Cystine bridges form between C30/C58 and C31/C73. N-linked (GlcNAc...) asparagine glycosylation occurs at N78. Basic residues predominate over residues 92-115 (KNGKGNVCHRKKHHGKRNSNRAHQ). The disordered stretch occupies residues 92–127 (KNGKGNVCHRKKHHGKRNSNRAHQGKHETYGHKTPY). Residues 116-127 (GKHETYGHKTPY) show a composition bias toward basic and acidic residues.

The protein belongs to the intercrine beta (chemokine CC) family. In terms of tissue distribution, preferentially expressed by epithelial cells of diverse tissues including normal and pathological colon, salivary gland, mammary gland, trachea and rectum. Also found in prostate, spleen, thyroid, psoriasis skin and in lower levels in peripheral blood leukocytes, small intestine, Peyer patches, stomach and normal skin.

It is found in the secreted. Functionally, chemotactic activity for resting CD4, CD8 T-cells and eosinophils. Binds to CCR3 and CCR10 and induces calcium mobilization in a dose-dependent manner. The sequence is that of C-C motif chemokine 28 (CCL28) from Homo sapiens (Human).